Consider the following 402-residue polypeptide: MLHNPTGKERLALAFLLGMLAILGPLNIDMYLPSFPEIAKDLSASASLVQLSLTACLVGLTIGQLIVGPVSDAQGRRKPLLICIFLFALSSLFCALSPNITTLVAARFLQGFTASAGLVLSRAIVRDVFTGRELSKFFSLLMVITAVAPMVAPMTGGAILLLPFATWHTIFHVLMIIGFLLVLLIALRLKETLPLEKRIPSSIGTSVKTMGSLLKDRSFMGYALTVGFIHGGSFAYVSGTPFVYQDIYGVSPQVFSILFGINGLAIISGSFIIGRFGGIIHEKSLLRIAVITAMIATAVLLTMTMIHGPLATLVISIFIYMITIGMVLTSTFTLAMEKQGHRAGSASALLGMLPLLLGSIVSPLVGINETTAVPMGAIMFVTAVIGSLAFFGLTKERVGQNS.

The next 12 helical transmembrane spans lie at Leu-11–Tyr-31, Leu-48–Gly-68, Leu-80–Ile-100, Phe-108–Val-125, Leu-140–Leu-160, Trp-167–Leu-187, Phe-219–Gly-239, Val-254–Gly-274, Leu-286–Ile-306, Gly-308–Leu-328, Ser-347–Ile-367, and Val-373–Leu-393.

Belongs to the major facilitator superfamily. Bcr/CmlA family.

It is found in the cell membrane. This is an uncharacterized protein from Bacillus subtilis (strain 168).